The following is a 342-amino-acid chain: Hydrogenase expression/formation protein HupV (342 aa).

The protein belongs to the HupK family.

The protein is Hydrogenase expression/formation protein HupV (hupV) of Azotobacter chroococcum mcd 1.